A 1170-amino-acid polypeptide reads, in one-letter code: Thrombospondin-1 (1170 aa).

The signal sequence occupies residues 1 to 18 (MGLAWGLGVLLLLHACGS). The segment at 47–95 (RLVKGPDPSSPAFRIEDANLIPPVPDKKFQDLVDAVRAEKGFLLLASLR) is heparin-binding. Positions 65–270 (NLIPPVPDKK…HKTKDLQAIC (206 aa)) constitute a Laminin G-like domain. An intrachain disulfide couples C171 to C232. N248 and N360 each carry an N-linked (GlcNAc...) asparagine glycan. Residues 316 to 373 (PLCYHNGVQYRTGDEWTVDSCTECRCQNSVTICKKVSCPIMPCSNATVPDGECCPRCW) enclose the VWFC domain. 3 TSP type-1 domains span residues 379–429 (DDGW…QECD), 435–490 (DGGW…DSCP), and 492–547 (NGGW…QDCP). Intrachain disulfides connect C391/C423, C395/C428, C406/C413, C447/C484, C451/C489, C462/C474, C504/C541, C508/C546, C519/C531, C551/C562, C556/C572, C575/C586, C592/C608, C599/C617, C620/C644, C650/C663, C657/C676, C678/C689, C705/C713, C718/C738, C754/C774, C777/C797, C813/C833, C836/C856, C874/C894, C910/C930, and C946/C1167. Residues 547–587 (PIDGCLSNPCFAGVQCTSYPDGSWKCGACPPGYSGDGVECK) form the EGF-like 1 domain. S553 is a glycosylation site (O-linked (Xyl) serine). Residues 646 to 690 (PRNPCTDGTHDCNKNAKCNYLGHYSDPMYRCECKPGYAGNGIICG) enclose the EGF-like 2 domain. TSP type-3 repeat units lie at residues 691–726 (EDTD…NSGQ), 727–762 (EDYD…NPAQ), 763–785 (YDYD…NPDQ), 786–821 (ADTD…NVDQ), 822–844 (KDTD…NPDQ), 845–882 (LDSD…NANQ), 883–918 (ADHD…NPDQ), and 919–954 (KDSD…DISE). N708 is a glycosylation site (N-linked (GlcNAc...) asparagine). The interval 839-944 (EHNPDQLDSD…DQDKVPDIDD (106 aa)) is disordered. Basic and acidic residues-rich tracts occupy residues 840–854 (HNPD…RIGD), 883–894 (ADHDKDGKGDAC), and 917–941 (DQKD…KVPD). The short motif at 926–928 (RGD) is the Cell attachment site element. Residues 958–1170 (RRFQMIPLDP…SDLKYECRDS (213 aa)) enclose the TSP C-terminal domain. N-linked (GlcNAc...) asparagine glycosylation is found at N1067 and N1085.

Belongs to the thrombospondin family. Homotrimer; disulfide-linked. Can bind to fibrinogen, fibronectin, laminin, type V collagen and integrins alpha-V/beta-1, alpha-V/beta-3 and alpha-IIb/beta-3. Binds heparin. Interacts (via the C-terminal domain) with CD47. Interacts (via the TSP type I repeats) with CD36; the interaction conveys an antiangiogenic effect. Interacts (via the TSP type I repeats) with HRG; the interaction blocks the antiangiogenic effect of THBS1 with CD36. Interacts with ATF6 (via lumenal domain). Interacts with FN1; this interaction is enhanced by TNFAIP6, which may act as a bridging molecule between FN1 and THBS1. Interacts with SIRPA; the interaction stimulates phosphorylation of SIRPA. In terms of tissue distribution, odontoblasts.

It is found in the secreted. The protein resides in the cell surface. Its subcellular location is the extracellular space. The protein localises to the extracellular matrix. It localises to the endoplasmic reticulum. It is found in the sarcoplasmic reticulum. Adhesive glycoprotein that mediates cell-to-cell and cell-to-matrix interactions. Multifunctional, involved in inflammation, angiogenesis, wound healing, reactive oxygen species (ROS) signaling, nitrous oxide (NO) signaling, apoptosis, senescence, aging, cellular self-renewal, stemness, and cardiovascular and metabolic homeostasis. Negatively modulates dendritic cell activation and cytokine release, as part of an autocrine feedback loop, contributing to the resolution of inflammation and immune homeostasis. Ligand for receptor CD47. Modulates nitrous oxide (NO) signaling via CD47, hence playing a role as a pressor agent, supporting blood pressure. Plays a role in endothelial cell senescence, acting via CD47, by increasing the abundance and activation of NADPH oxidase NOX1, and so generating excess ROS. Inhibits stem cell self-renewal, acting via CD47 signaling, probably by regulation of the stem cell transcription factors POU5F1/OCT4, SOX2, MYC/c-Myc and KLF4. Negatively modulates wound healing, acting via CD47. Ligand for receptor CD36. Involved in inducing apoptosis in podocytes in response to elevated free fatty acids, acting via CD36. Plays a role in suppressing angiogenesis, acting, depending on context, via CD36 or CD47. Promotes cellular senescence in a TP53-CDKN1A-RB1 signaling-dependent manner. Ligand for immunoglobulin-like cell surface receptor SIRPA. Involved in ROS signaling in non-phagocytic cells, stimulating NADPH oxidase-derived ROS production, acting via interaction with SIRPA. Plays a role in metabolic dysfunction in diet-induced obesity, perhaps acting by exacerbating adipose inflammatory activity; its effects may be mediated, at least in part, through enhanced adipocyte proliferation. Plays a role in ER stress response, via its interaction with the activating transcription factor 6 alpha (ATF6) which produces adaptive ER stress response factors. May be involved in age-related conditions, including metabolic dysregulation, during normal aging. The chain is Thrombospondin-1 (THBS1) from Bos taurus (Bovine).